The sequence spans 321 residues: tRNA U34 carboxymethyltransferase (321 aa).

Carboxy-S-adenosyl-L-methionine contacts are provided by residues lysine 90, tryptophan 104, lysine 109, glycine 129, 151-153 (DPT), 180-181 (IE), methionine 195, tyrosine 199, and arginine 314.

Belongs to the class I-like SAM-binding methyltransferase superfamily. CmoB family. In terms of assembly, homotetramer.

The catalysed reaction is carboxy-S-adenosyl-L-methionine + 5-hydroxyuridine(34) in tRNA = 5-carboxymethoxyuridine(34) in tRNA + S-adenosyl-L-homocysteine + H(+). Its function is as follows. Catalyzes carboxymethyl transfer from carboxy-S-adenosyl-L-methionine (Cx-SAM) to 5-hydroxyuridine (ho5U) to form 5-carboxymethoxyuridine (cmo5U) at position 34 in tRNAs. The sequence is that of tRNA U34 carboxymethyltransferase from Haemophilus influenzae (strain 86-028NP).